A 798-amino-acid polypeptide reads, in one-letter code: Cold shock domain-containing protein E1 (798 aa).

Position 1 is an N-acetylmethionine (Met1). The CSD 1 domain maps to 26 to 87 (ETGVIEKLLT…RTGKPIAVKL (62 aa)). Lys81 is subject to N6-acetyllysine. Lys91 participates in a covalent cross-link: Glycyl lysine isopeptide (Lys-Gly) (interchain with G-Cter in SUMO2). The residue at position 123 (Ser123) is a Phosphoserine. The region spanning 136-179 (VFYLTYTPEDVEGNVQLETGDKINFVIDNNKHTGAVSARNIMLL) is the CSD 2; truncated domain. Residues 186-245 (CQGVVCAMKEAFGFIERGDVVKEIFFHYSEFKGDLETLQPGDDVEFTIKDRNGKEVATDV) enclose the CSD 3 domain. A Phosphoserine modification is found at Ser276. The CSD 4; truncated domain maps to 297–337 (LPFGDKDTKSKVTLLEGDHVRFNISTDRRDKLERATNIEVL). CSD domains follow at residues 349 to 410 (EMGV…AIRI) and 447 to 507 (NKGK…ATCV). Phosphoserine is present on Ser514. Positions 519 to 579 (LLGYVATLKD…KGNKVSAEKV (61 aa)) constitute a CSD 7 domain. Residue Ser584 is modified to Phosphoserine. CSD domains are found at residues 610–670 (PTQT…AYNI) and 674–735 (RRAT…ACNV). The SUZ-C domain occupies 748–789 (PRPDRLVNRLKNITLDDASAPRLMVLRQPRGPDNSMGFGAER). Thr761 carries the post-translational modification Phosphothreonine.

Belongs to the UNR family. As to quaternary structure, component of a multi subunit autoregulatory ribonucleoprotein complex (ARC), at least composed of IGF2BP1, PABPC1 and CSDE1. Interacts with STRAP. Part of a complex associated with the FOS mCRD domain and consisting of PABPC1, PAIP1, HNRPD and SYNCRIP. The interaction with PABPC1 is direct and RNA-independent. Interacts with EIF4ENIF1/4E-T.

The protein resides in the cytoplasm. Its subcellular location is the stress granule. It localises to the P-body. RNA-binding protein involved in translationally coupled mRNA turnover. Implicated with other RNA-binding proteins in the cytoplasmic deadenylation/translational and decay interplay of the FOS mRNA mediated by the major coding-region determinant of instability (mCRD) domain. Required for efficient formation of stress granules. Its function is as follows. (Microbial infection) Required for internal initiation of translation of human rhinovirus RNA. In Homo sapiens (Human), this protein is Cold shock domain-containing protein E1.